The primary structure comprises 340 residues: MRKVIPILGILLLSFIILGCLGSESREARLIIFHAGSLSIPLSQVEEKFTKYAQEKLGVKVTFQDEASGSVKAVRKVTDLKKRADIVAVADYTLIPQLMIPNYTDFYVLFATNEIVIAFTNKSKYADEMLKNPDKWYEILSRPDVSFGFSDPNQDPCGYRSVMVMKLAELYYGRPIFKELVEKTTNIYSNGTRIYAPKEIIIKDKRVIMRPKETDLVGLVESGSLDYIFIYKSVAKQHHLSYITLPDDINLGDFNKADFYGRVSITLGSTGKTIKAKPIVYGITVLKNAPNRELAIEFLRFLLGNEGRKIFEDNYQEFLSPPVAFGNVPPEIRRLVEVKD.

The signal sequence occupies residues 1–22 (MRKVIPILGILLLSFIILGCLG). Molybdate-binding positions include 36-37 (GS), Ser70, 155-157 (DPC), Glu213, and Tyr231. Tungstate contacts are provided by residues 36-37 (GS), Ser70, 155-157 (DPC), Glu213, and Tyr231.

The protein belongs to the bacterial solute-binding protein 1 family. WtpA subfamily. In terms of assembly, the complex is composed of two ATP-binding proteins (WtpC), two transmembrane proteins (WtpB) and a solute-binding protein (WtpA).

It localises to the cell membrane. Functionally, part of the ABC transporter complex WtpABC involved in molybdate/tungstate import. Binds tungstate and molybdate. This Pyrococcus horikoshii (strain ATCC 700860 / DSM 12428 / JCM 9974 / NBRC 100139 / OT-3) protein is Molybdate/tungstate-binding protein WtpA (wtpA).